Reading from the N-terminus, the 275-residue chain is 3-methyl-2-oxobutanoate hydroxymethyltransferase (275 aa).

Residues Asp55 and Asp94 each coordinate Mg(2+). Residues 55–56, Asp94, and Lys122 each bind 3-methyl-2-oxobutanoate; that span reads DS. Glu124 provides a ligand contact to Mg(2+). The active-site Proton acceptor is Glu191.

This sequence belongs to the PanB family. Homodecamer; pentamer of dimers. Requires Mg(2+) as cofactor.

The protein resides in the cytoplasm. The catalysed reaction is 3-methyl-2-oxobutanoate + (6R)-5,10-methylene-5,6,7,8-tetrahydrofolate + H2O = 2-dehydropantoate + (6S)-5,6,7,8-tetrahydrofolate. It participates in cofactor biosynthesis; (R)-pantothenate biosynthesis; (R)-pantoate from 3-methyl-2-oxobutanoate: step 1/2. Catalyzes the reversible reaction in which hydroxymethyl group from 5,10-methylenetetrahydrofolate is transferred onto alpha-ketoisovalerate to form ketopantoate. This chain is 3-methyl-2-oxobutanoate hydroxymethyltransferase, found in Marinomonas sp. (strain MWYL1).